Reading from the N-terminus, the 419-residue chain is Gamma-glutamyl phosphate reductase (419 aa).

The protein belongs to the gamma-glutamyl phosphate reductase family.

The protein resides in the cytoplasm. The catalysed reaction is L-glutamate 5-semialdehyde + phosphate + NADP(+) = L-glutamyl 5-phosphate + NADPH + H(+). It participates in amino-acid biosynthesis; L-proline biosynthesis; L-glutamate 5-semialdehyde from L-glutamate: step 2/2. Catalyzes the NADPH-dependent reduction of L-glutamate 5-phosphate into L-glutamate 5-semialdehyde and phosphate. The product spontaneously undergoes cyclization to form 1-pyrroline-5-carboxylate. The chain is Gamma-glutamyl phosphate reductase from Oleidesulfovibrio alaskensis (strain ATCC BAA-1058 / DSM 17464 / G20) (Desulfovibrio alaskensis).